A 599-amino-acid chain; its full sequence is Thiamine transporter THI72 (599 aa).

The next 11 helical transmembrane spans lie at 42–62 (WGFW…GMWI), 78–98 (IGAF…NSCP), 112–132 (FVFG…MSIV), 174–194 (LIGF…KPYH), 197–217 (YILI…VIYL), 280–300 (IVAL…GASA), 333–353 (FFCG…NCGF), 372–392 (GAIF…YNSS), 395–415 (FLTV…VMIC), 447–467 (AIVA…WEVN), and 484–504 (SFFS…LFPF). Positions 553–599 (HEYKPESSDDELPELTKTSSENTKVFEIVHQKDNEKESSTSSEKQIA) are disordered. Phosphoserine is present on residues serine 560 and serine 572. A compositionally biased stretch (basic and acidic residues) spans 579–590 (EIVHQKDNEKES).

Belongs to the purine-cytosine permease (2.A.39) family.

It is found in the membrane. Low affinity thiamine transporter responsible for intake of thiamine. It is possible that the primary function is the uptake of closely related compounds and that thiamine transport is a secondary activity of these proteins. This is Thiamine transporter THI72 (THI72) from Saccharomyces cerevisiae (strain ATCC 204508 / S288c) (Baker's yeast).